The following is a 337-amino-acid chain: CMP-N-acetylneuraminate-beta-galactosamide-alpha-2,3-sialyltransferase 1 (337 aa).

Topologically, residues 1–4 are cytoplasmic; it reads MRRK. Residues 5–25 traverse the membrane as a helical; Signal-anchor for type II membrane protein segment; it reads TLKYLTFFLLFIFLTSFVLNY. The Lumenal portion of the chain corresponds to 26 to 337; it reads SNTGVPSAWF…INKIRIFKGR (312 aa). 3 disulfide bridges follow: C56–C61, C58–C136, and C139–C278. The N-linked (GlcNAc...) asparagine glycan is linked to N76. Q102 contacts substrate. N109 carries N-linked (GlcNAc...) asparagine glycosylation. Substrate is bound by residues N144, N167, Y227, Y263, G267, G287, H296, and H313. N320 carries an N-linked (GlcNAc...) asparagine glycan.

Belongs to the glycosyltransferase 29 family. Post-translationally, the soluble form derives from the membrane form by proteolytic processing. In terms of tissue distribution, highly expressed in submaxillary gland and to a much lesser extent in liver, lung, kidney, heart and brain.

It is found in the golgi apparatus. The protein localises to the golgi stack membrane. Its subcellular location is the trans-Golgi network membrane. The protein resides in the secreted. The enzyme catalyses a beta-D-galactosyl-(1-&gt;3)-N-acetyl-alpha-D-galactosaminyl derivative + CMP-N-acetyl-beta-neuraminate = an N-acetyl-alpha-neuraminyl-(2-&gt;3)-beta-D-galactosyl-(1-&gt;3)-N-acetyl-alpha-D-galactosaminyl derivative + CMP + H(+). The catalysed reaction is a ganglioside GM1 (d18:1(4E)) + CMP-N-acetyl-beta-neuraminate = a ganglioside GD1a (d18:1(4E)) + CMP + H(+). It catalyses the reaction ganglioside GM1 (d18:1(4E)/18:0) + CMP-N-acetyl-beta-neuraminate = ganglioside GD1a (18:1(4E)/18:0) + CMP + H(+). It carries out the reaction a ganglioside GA1 + CMP-N-acetyl-beta-neuraminate = a ganglioside GM1b + CMP + H(+). The enzyme catalyses a ganglioside GA1 (d18:1(4E)) + CMP-N-acetyl-beta-neuraminate = a ganglioside GM1b (d18:1(4E)) + CMP + H(+). The catalysed reaction is a ganglioside GD1b + CMP-N-acetyl-beta-neuraminate = a ganglioside GT1b + CMP + H(+). It catalyses the reaction a 3-O-[beta-D-galactosyl-(1-&gt;3)-N-acetyl-alpha-D-galactosaminyl]-L-threonyl-[protein] + CMP-N-acetyl-beta-neuraminate = a 3-O-[N-acetyl-alpha-neuraminyl-(2-&gt;3)-beta-D-galactosyl-(1-&gt;3)-N-acetyl-alpha-D-galactosaminyl]-L-threonyl-[protein] + CMP + H(+). It carries out the reaction a 3-O-[beta-D-galactosyl-(1-&gt;3)-N-acetyl-alpha-D-galactosaminyl]-L-seryl-[protein] + CMP-N-acetyl-beta-neuraminate = 3-O-[N-acetyl-alpha-neuraminyl-(2-&gt;3)-beta-D-galactosyl-(1-&gt;3)-N-acetyl-alpha-D-galactosaminyl]-L-seryl-[protein] + CMP + H(+). Its pathway is protein modification; protein glycosylation. It participates in glycolipid biosynthesis. In terms of biological role, a beta-galactoside alpha2-&gt;3 sialyltransferase involved in terminal sialylation of glycoproteins and glycolipids. Catalyzes the transfer of sialic acid (N-acetyl-neuraminic acid; Neu5Ac) from the nucleotide sugar donor CMP-Neu5Ac onto acceptor Galbeta-(1-&gt;3)-GalNAc-terminated glycoconjugates through an alpha2-3 linkage. Adds sialic acid to the core 1 O-glycan, Galbeta-(1-&gt;3)-GalNAc-O-Ser/Thr, which is a major structure of mucin-type O-glycans. As part of a homeostatic mechanism that regulates CD8-positive T cell numbers, sialylates core 1 O-glycans of T cell glycoproteins, SPN/CD43 and PTPRC/CD45. Prevents premature apoptosis of thymic CD8-positive T cells prior to peripheral emigration, whereas in the secondary lymphoid organs controls the survival of CD8-positive memory T cells generated following a successful immune response. Transfers sialic acid to asialofetuin, presumably onto Galbeta-(1-&gt;3)-GalNAc-O-Ser. Sialylates GM1a, GA1 and GD1b gangliosides to form GD1a, GM1b and GT1b, respectively. This is CMP-N-acetylneuraminate-beta-galactosamide-alpha-2,3-sialyltransferase 1 (St3gal1) from Mus musculus (Mouse).